A 359-amino-acid polypeptide reads, in one-letter code: Adenosine deaminase (359 aa).

Positions 15 and 17 each coordinate Zn(2+). Residues H17, D19, and G184 each coordinate substrate. Position 213 (H213) interacts with Zn(2+). The active-site Proton donor is E216. D295 serves as a coordination point for Zn(2+). D296 is a substrate binding site.

It belongs to the metallo-dependent hydrolases superfamily. Adenosine and AMP deaminases family. It depends on Zn(2+) as a cofactor.

It localises to the cell membrane. It is found in the cell junction. The protein localises to the cytoplasmic vesicle lumen. The protein resides in the cytoplasm. Its subcellular location is the lysosome. It carries out the reaction adenosine + H2O + H(+) = inosine + NH4(+). The enzyme catalyses 2'-deoxyadenosine + H2O + H(+) = 2'-deoxyinosine + NH4(+). Functionally, catalyzes the hydrolytic deamination of adenosine and 2-deoxyadenosine. Plays an important role in purine metabolism and in adenosine homeostasis. Modulates signaling by extracellular adenosine, and so contributes indirectly to cellular signaling events. May act as a positive regulator of T-cell coactivation. The chain is Adenosine deaminase (ada) from Danio rerio (Zebrafish).